Reading from the N-terminus, the 223-residue chain is Urease accessory protein UreF (223 aa).

The protein belongs to the UreF family. UreD, UreF and UreG form a complex that acts as a GTP-hydrolysis-dependent molecular chaperone, activating the urease apoprotein by helping to assemble the nickel containing metallocenter of UreC. The UreE protein probably delivers the nickel.

The protein resides in the cytoplasm. In terms of biological role, required for maturation of urease via the functional incorporation of the urease nickel metallocenter. The polypeptide is Urease accessory protein UreF (Agrobacterium fabrum (strain C58 / ATCC 33970) (Agrobacterium tumefaciens (strain C58))).